An 841-amino-acid chain; its full sequence is Probable outer membrane protein pmp2 (841 aa).

Positions Met-1–Ala-24 are cleaved as a signal peptide. One can recognise an Autotransporter domain in the interval Gly-537–Phe-841.

Belongs to the PMP outer membrane protein family.

It is found in the secreted. Its subcellular location is the cell wall. It localises to the cell outer membrane. The sequence is that of Probable outer membrane protein pmp2 (pmp2) from Chlamydia pneumoniae (Chlamydophila pneumoniae).